Consider the following 346-residue polypeptide: Nicotinate-nucleotide--dimethylbenzimidazole phosphoribosyltransferase (346 aa).

The active-site Proton acceptor is glutamate 313.

It belongs to the CobT family.

It carries out the reaction 5,6-dimethylbenzimidazole + nicotinate beta-D-ribonucleotide = alpha-ribazole 5'-phosphate + nicotinate + H(+). The protein operates within nucleoside biosynthesis; alpha-ribazole biosynthesis; alpha-ribazole from 5,6-dimethylbenzimidazole: step 1/2. Catalyzes the synthesis of alpha-ribazole-5'-phosphate from nicotinate mononucleotide (NAMN) and 5,6-dimethylbenzimidazole (DMB). In Parabacteroides distasonis (strain ATCC 8503 / DSM 20701 / CIP 104284 / JCM 5825 / NCTC 11152), this protein is Nicotinate-nucleotide--dimethylbenzimidazole phosphoribosyltransferase.